Reading from the N-terminus, the 305-residue chain is Glycine--tRNA ligase alpha subunit (305 aa).

Belongs to the class-II aminoacyl-tRNA synthetase family. In terms of assembly, tetramer of two alpha and two beta subunits.

Its subcellular location is the cytoplasm. It catalyses the reaction tRNA(Gly) + glycine + ATP = glycyl-tRNA(Gly) + AMP + diphosphate. This is Glycine--tRNA ligase alpha subunit from Streptococcus pneumoniae serotype 4 (strain ATCC BAA-334 / TIGR4).